Consider the following 79-residue polypeptide: Sec-independent protein translocase protein TatA (79 aa).

A helical transmembrane segment spans residues Met1–Gly21. The span at Leu43–Asp60 shows a compositional bias: basic and acidic residues. The segment at Leu43–Val79 is disordered.

It belongs to the TatA/E family. In terms of assembly, the Tat system comprises two distinct complexes: a TatABC complex, containing multiple copies of TatA, TatB and TatC subunits, and a separate TatA complex, containing only TatA subunits. Substrates initially bind to the TatABC complex, which probably triggers association of the separate TatA complex to form the active translocon.

Its subcellular location is the cell inner membrane. Its function is as follows. Part of the twin-arginine translocation (Tat) system that transports large folded proteins containing a characteristic twin-arginine motif in their signal peptide across membranes. TatA could form the protein-conducting channel of the Tat system. The sequence is that of Sec-independent protein translocase protein TatA from Rhodopseudomonas palustris (strain BisB5).